A 1403-amino-acid chain; its full sequence is Mannuronan C5-epimerase AlgE1 (1403 aa).

PbH1 repeat units lie at residues 133–155, 157–179, 180–202, 204–226, 257–279, 280–302, and 320–359; these read DRDVTLERVEIREMSGYGFDPHE, TINLTIRDSVAHDNSLDGFVADY, QVGGVFENNVSYNNDRHGFNIVT, TNDFVLSNNVAYGNGGAGLVVQR, AHDVTLQNAEIYGNGLYGVRVYG, AQDVQILDNQIHDNSQNGAYAEV, and TTGTWLEGNVISGSANSTYGIQERADGTDYSSLYANSIDG. 2 disordered regions span residues 372 to 395 and 408 to 428; these read STVSSQSGSGQQATLEGSAGNDAL and AGDDRLNGDAGNDILDGGAGR. Hemolysin-type calcium-binding repeat units lie at residues 388–403, 406–422, 424–440, 557–573, 574–591, 697–712, 716–732, and 734–750; these read GSAGNDALSGTEAHET, GQAGDDRLNGDAGNDIL, GGAGRDNLTGGAGADTF, GYGGNDTLNGGAGDDIL, VGGAGRDSLTGGAGADVF, EGTDGNDTLQGTEANE, GLDGRDNLNGGAGDDIL, and GGAGRDTLTGGTGADTF. PbH1 repeat units follow at residues 977 to 999, 1001 to 1023, 1024 to 1046, 1048 to 1070, 1101 to 1123, 1124 to 1146, 1163 to 1185, and 1190 to 1212; these read DRNVTIERVEIREMSGYGFDPHE, TINLTIRDSVAHDNGLDGFVADY, LVDSVFENNVAYNNDRHGFNIVT, TYDFVMTNNVAYGNGGAGLTIQR, TNNVTLQNAEIYGNGSSGVRLYG, TEDVQILDNQIHDNSQNGTYPEV, TLNTRIEGNLIDASDNANYAVRE, and SDYTTLVDNDISGGQVASVQLSG. 3 Hemolysin-type calcium-binding repeats span residues 1227–1243, 1244–1261, and 1263–1279; these read GTDGNDVLVGSDANDQL, YGGAGDDRLDGGAGDDLL, and GGAGRDDLTGGTGADTF.

The protein belongs to the D-mannuronate C5-epimerase family. It depends on Ca(2+) as a cofactor.

It localises to the secreted. It catalyses the reaction [(1-&gt;4)-beta-D-mannuronosyl](n) = [alginate](n). It participates in glycan biosynthesis; alginate biosynthesis. Its activity is regulated as follows. Inhibited by zinc. Converts beta-D-mannuronic acid (M) to alpha-L-guluronic acid (G), producing a polymer with gel-forming capacity, required for the formation of the cyst coat. This Azotobacter vinelandii protein is Mannuronan C5-epimerase AlgE1.